The following is a 249-amino-acid chain: Caffeoyl-CoA O-methyltransferase (249 aa).

Lysine 21 provides a ligand contact to substrate. S-adenosyl-L-methionine-binding positions include threonine 63, glutamate 85, 87 to 88 (GV), serine 93, aspartate 111, and alanine 140. Aspartate 162 is a substrate binding site. A divalent metal cation is bound at residue aspartate 162. Residue aspartate 164 coordinates S-adenosyl-L-methionine. Aspartate 188 and asparagine 189 together coordinate a divalent metal cation. Asparagine 193 contributes to the substrate binding site.

The protein belongs to the class I-like SAM-binding methyltransferase superfamily. Cation-dependent O-methyltransferase family. CCoAMT subfamily. In terms of assembly, homodimer. A divalent metal cation serves as cofactor.

The catalysed reaction is (E)-caffeoyl-CoA + S-adenosyl-L-methionine = (E)-feruloyl-CoA + S-adenosyl-L-homocysteine + H(+). It functions in the pathway aromatic compound metabolism; phenylpropanoid biosynthesis. Functionally, methylates caffeoyl-CoA to feruloyl-CoA and 5-hydroxyferuloyl-CoA to sinapoyl-CoA. Plays a role in the synthesis of feruloylated polysaccharides. Involved in the reinforcement of the plant cell wall. Also involved in the responding to wounding or pathogen challenge by the increased formation of cell wall-bound ferulic acid polymers. In Eucalyptus gunnii (Cider gum), this protein is Caffeoyl-CoA O-methyltransferase.